A 486-amino-acid polypeptide reads, in one-letter code: CDT1-like protein b (486 aa).

Disordered stretches follow at residues 273–294 (PEGG…PSRS) and 348–371 (VKDD…ASDD). Residues 281 to 294 (LRSTNSLARGPSRS) show a composition bias toward polar residues. Basic and acidic residues predominate over residues 348–363 (VKDDISNESGDEKSNY).

It belongs to the Cdt1 family. As to expression, expressed in proliferating (e.g. shoot and root apical meristems, organ primordia, guard cells and stomatal lineage) and endoreplicating cells (e.g. developing trichomes).

It is found in the nucleus. Member of the pre-replication complex. Regulates endoreduplication. Involved in the coordination of cell and plastid division. This chain is CDT1-like protein b (CDT1B), found in Arabidopsis thaliana (Mouse-ear cress).